A 229-amino-acid chain; its full sequence is uncharacterized protein (229 aa).

Residues 1–26 form the signal peptide; the sequence is MSRNDARYLRCTAALGAAFFACGAAA.

This sequence belongs to the OmpW/AlkL family.

The protein localises to the cell outer membrane. This is an uncharacterized protein from Sinorhizobium fredii (strain NBRC 101917 / NGR234).